Here is a 1227-residue protein sequence, read N- to C-terminus: Tyrosine-protein kinase receptor ver-3 (1227 aa).

Positions Met-1–Ser-17 are cleaved as a signal peptide. The Extracellular segment spans residues Tyr-18 to Ser-764. An Ig-like C2-type 1 domain is found at Pro-20 to Cys-110. A disulfide bridge links Cys-52 with Cys-110. Asn-119, Asn-211, Asn-245, Asn-255, Asn-381, Asn-425, and Asn-528 each carry an N-linked (GlcNAc...) asparagine glycan. The Ig-like C2-type 2 domain occupies Val-200 to Thr-325. Cys-204 and Cys-313 form a disulfide bridge. Ig-like C2-type domains lie at Pro-565 to Asp-666 and Pro-673 to Asn-758. Intrachain disulfides connect Cys-592–Cys-650 and Cys-696–Cys-740. Residue Asn-697 is glycosylated (N-linked (GlcNAc...) asparagine). The chain crosses the membrane as a helical span at residues Leu-765–Leu-785. Residues Thr-786 to Ala-1227 lie on the Cytoplasmic side of the membrane. A Protein kinase domain is found at Leu-847 to Leu-1175. Residues Ile-853 to Val-861 and Lys-886 contribute to the ATP site. The Proton acceptor role is filled by Asp-1030. The tract at residues Asp-1194–Ala-1227 is disordered. Residues Lys-1214–Ala-1227 are compositionally biased toward basic and acidic residues.

It belongs to the protein kinase superfamily. Tyr protein kinase family. In terms of tissue distribution, expressed in the ALA neuron.

It localises to the cell membrane. It carries out the reaction L-tyrosyl-[protein] + ATP = O-phospho-L-tyrosyl-[protein] + ADP + H(+). Its function is as follows. Receptor tyrosine kinase which may be involved, downstream of pvf-1, in the positioning of ray 1, the most anterior ray sensillum in the male tail. This is Tyrosine-protein kinase receptor ver-3 from Caenorhabditis elegans.